Consider the following 134-residue polypeptide: Small ribosomal subunit protein uS11 (134 aa).

It belongs to the universal ribosomal protein uS11 family. Part of the 30S ribosomal subunit. Interacts with proteins S7 and S18. Binds to IF-3.

Its function is as follows. Located on the platform of the 30S subunit, it bridges several disparate RNA helices of the 16S rRNA. Forms part of the Shine-Dalgarno cleft in the 70S ribosome. The sequence is that of Small ribosomal subunit protein uS11 from Parafrankia sp. (strain EAN1pec).